A 475-amino-acid chain; its full sequence is MNGPSSRSSHLSQPVVKSVLVYRNGDPFFAGRRVVIHEKKVSSFDVFLKEVTGGVQAPFGAVRNIYTPRTGHRIRKLDQIESGGNYVAGGPEAFKKLNYLDIGEIKKRPMEAVNTEVKPVIHSRINVSARFRKSLHEPCTIFLIANGDLISPASRLLIPKKALNQWDHVLQMVTEKITLRSGAVHRLYTLEGKLVESGAELENGQFYVAVGRDKFKRLPYSELLFDKSAMRRPYGQKASSLPPMVGSRKSKGSGNYRQSKSTIGSSDNSSPQPLKRKGKKDSNSEKPTKVKQSVKSKTSHQAIPDNGEGIFKAGAERSETRGAAEVQEDEDTQVEVPVDQRPAEIVDEEEDGEKTSKDANQKEDFSAMNGETEDRGGSKAAGTSEQEEGIPDHGEKKSSPSRVNGGTDEENGEELDQVAEELQPTEDEKGKAEGDNSGQDEAGLDAQRPPRPEVTVTSPQENEENEANKASSAVA.

2 consecutive Doublecortin domains span residues 17–100 (KSVL…LNYL) and 139–221 (CTIF…LPYS). Residues 234–475 (YGQKASSLPP…EANKASSAVA (242 aa)) are disordered. Residues 252–272 (GSGNYRQSKSTIGSSDNSSPQ) show a composition bias toward polar residues. Position 270 is a phosphoserine (Ser270). Residues 353 to 365 (EKTSKDANQKEDF) show a composition bias toward basic and acidic residues. Over residues 407–425 (TDEENGEELDQVAEELQPT) the composition is skewed to acidic residues.

As to quaternary structure, interacts with DVL1, DVL2 and DVL3. As to expression, expressed in hair cells of the inner ear.

The protein localises to the cell projection. Its subcellular location is the cilium. The protein resides in the cytoplasm. It is found in the cytoskeleton. It localises to the cilium axoneme. The protein localises to the kinocilium. Protein that plays a role in the inhibition of canonical Wnt signaling pathway. May be involved in neuronal migration during development of the cerebral neocortex. Involved in the control of ciliogenesis and ciliary length. In Mus musculus (Mouse), this protein is Doublecortin domain-containing protein 2 (Dcdc2).